A 1155-amino-acid chain; its full sequence is DNA-directed RNA polymerase subunit beta (1155 aa).

Belongs to the RNA polymerase beta chain family. The RNAP catalytic core consists of 2 alpha, 1 beta, 1 beta' and 1 omega subunit. When a sigma factor is associated with the core the holoenzyme is formed, which can initiate transcription.

The enzyme catalyses RNA(n) + a ribonucleoside 5'-triphosphate = RNA(n+1) + diphosphate. In terms of biological role, DNA-dependent RNA polymerase catalyzes the transcription of DNA into RNA using the four ribonucleoside triphosphates as substrates. This chain is DNA-directed RNA polymerase subunit beta, found in Borreliella afzelii (strain PKo) (Borrelia afzelii).